Here is a 145-residue protein sequence, read N- to C-terminus: Small ribosomal subunit protein eS19 (145 aa).

K23 is subject to N6-acetyllysine. An Omega-N-methylarginine modification is found at R67. N6-acetyllysine occurs at positions 111 and 115. At K143 the chain carries N6-succinyllysine.

This sequence belongs to the eukaryotic ribosomal protein eS19 family. Component of the small ribosomal subunit. Part of the small subunit (SSU) processome, composed of more than 70 proteins and the RNA chaperone small nucleolar RNA (snoRNA) U3. Interacts with RPS19BP1; the interaction is direct and mediates the integration of RPS19 in state post-A1. Interacts with RPS19BP1.

The protein localises to the cytoplasm. It is found in the nucleus. Its subcellular location is the nucleolus. Its function is as follows. Component of the small ribosomal subunit. The ribosome is a large ribonucleoprotein complex responsible for the synthesis of proteins in the cell. Required for pre-rRNA processing and maturation of 40S ribosomal subunits. Part of the small subunit (SSU) processome, first precursor of the small eukaryotic ribosomal subunit. During the assembly of the SSU processome in the nucleolus, many ribosome biogenesis factors, an RNA chaperone and ribosomal proteins associate with the nascent pre-rRNA and work in concert to generate RNA folding, modifications, rearrangements and cleavage as well as targeted degradation of pre-ribosomal RNA by the RNA exosome. This chain is Small ribosomal subunit protein eS19 (RPS19), found in Pongo abelii (Sumatran orangutan).